Consider the following 193-residue polypeptide: Ancillary SecYEG translocon subunit (193 aa).

Topologically, residues methionine 1 to leucine 11 are cytoplasmic. A helical transmembrane segment spans residues asparagine 12 to serine 34. Topologically, residues lysine 35–asparagine 193 are extracellular.

Belongs to the YfgM family. In terms of assembly, interacts with the Sec translocon. Forms a complex with PpiD.

The protein localises to the cell membrane. May mediate protein transfer from the Sec translocon to the chaperone network via its extracellular C-terminal region. The sequence is that of Ancillary SecYEG translocon subunit from Buchnera aphidicola subsp. Baizongia pistaciae (strain Bp).